A 342-amino-acid chain; its full sequence is Phosphate acyltransferase (342 aa).

Belongs to the PlsX family. Homodimer. Probably interacts with PlsY.

It is found in the cytoplasm. The enzyme catalyses a fatty acyl-[ACP] + phosphate = an acyl phosphate + holo-[ACP]. The protein operates within lipid metabolism; phospholipid metabolism. Catalyzes the reversible formation of acyl-phosphate (acyl-PO(4)) from acyl-[acyl-carrier-protein] (acyl-ACP). This enzyme utilizes acyl-ACP as fatty acyl donor, but not acyl-CoA. The polypeptide is Phosphate acyltransferase (Shewanella putrefaciens (strain CN-32 / ATCC BAA-453)).